We begin with the raw amino-acid sequence, 192 residues long: Dihydrofolate reductase (192 aa).

A DHFR domain is found at 5–191 (NVAIIVAALK…FTYNYTLWTR (187 aa)). Residues Ala-11 and 18-24 (GIGYKGK) contribute to the NADP(+) site. Substrate is bound at residue 32 to 37 (EIRYFK). 56-58 (RKT) contributes to the NADP(+) binding site. Arg-72 is a substrate binding site. Residue 78-80 (SRS) coordinates NADP(+). Residues Ile-112 and Tyr-118 each contribute to the substrate site. 113–120 (GGAEIYNE) is a binding site for NADP(+).

It belongs to the dihydrofolate reductase family.

The enzyme catalyses (6S)-5,6,7,8-tetrahydrofolate + NADP(+) = 7,8-dihydrofolate + NADPH + H(+). Its pathway is cofactor biosynthesis; tetrahydrofolate biosynthesis; 5,6,7,8-tetrahydrofolate from 7,8-dihydrofolate: step 1/1. Functionally, key enzyme in folate metabolism. Catalyzes an essential reaction for de novo glycine and purine synthesis, and for DNA precursor synthesis. The protein is Dihydrofolate reductase (DFR1) of Candida albicans (Yeast).